Here is a 287-residue protein sequence, read N- to C-terminus: tRNA selenocysteine 1-associated protein 1 (287 aa).

RRM domains are found at residues 3 to 86 (ASLW…YATY) and 96 to 175 (YSLF…VAIP).

It belongs to the RRM TRSPAP family. As to quaternary structure, component of the tRNA(Sec) complex composed at least of EEFSEC, SECISBP2, SEPHS1, SEPSECS, TRNAU1AP and tRNA(Sec). Associates with mRNP and/or polysomes. Found in a complex with tRNA(Sec). Interacts with SEPSECS. In terms of tissue distribution, ubiquitous.

The protein localises to the nucleus. It is found in the cytoplasm. In terms of biological role, involved in the early steps of selenocysteine biosynthesis and tRNA(Sec) charging to the later steps resulting in the cotranslational incorporation of selenocysteine into selenoproteins. Stabilizes the SECISBP2, EEFSEC and tRNA(Sec) complex. May be involved in the methylation of tRNA(Sec). Enhances efficiency of selenoproteins synthesis. The polypeptide is tRNA selenocysteine 1-associated protein 1 (Trnau1ap) (Rattus norvegicus (Rat)).